A 317-amino-acid polypeptide reads, in one-letter code: Methionyl-tRNA formyltransferase (317 aa).

Position 112-115 (112-115) interacts with (6S)-5,6,7,8-tetrahydrofolate; it reads SLLP.

Belongs to the Fmt family.

It catalyses the reaction L-methionyl-tRNA(fMet) + (6R)-10-formyltetrahydrofolate = N-formyl-L-methionyl-tRNA(fMet) + (6S)-5,6,7,8-tetrahydrofolate + H(+). In terms of biological role, attaches a formyl group to the free amino group of methionyl-tRNA(fMet). The formyl group appears to play a dual role in the initiator identity of N-formylmethionyl-tRNA by promoting its recognition by IF2 and preventing the misappropriation of this tRNA by the elongation apparatus. The chain is Methionyl-tRNA formyltransferase from Mycoplasma mycoides subsp. mycoides SC (strain CCUG 32753 / NCTC 10114 / PG1).